A 137-amino-acid polypeptide reads, in one-letter code: uncharacterized protein (137 aa).

This is an uncharacterized protein from Saccharomyces cerevisiae (strain ATCC 204508 / S288c) (Baker's yeast).